A 711-amino-acid chain; its full sequence is MLHLLSKDEFNSTLKSFEEQTESVSWIIDLRLHSKYAVSHIKNAINVSLPTALLRRPSFDIGKVFACIKCNVKVSLDEINAIFLYDSSMAGMNRIYDLVQKFRRGGYSKKIYLLSNGFEAFASSHPDAIVSTEMVKESVPYKIDINENCKLDILHLSDPSAVSTPISPDYSFPLRVPINIPPPLCTPSVVSDTFSEFASHAEYPGFSGLTPFSIHSPTASSVRSCQSIYGSPLSPPNSAFQAEMPYFPISPAISCASSCPSTPDEQKNFFIVGNAPQQTPARPSLRSVPSYPSSNNQRRPSASRVRSFSNYVKSSNVVNPSLSQASLEIIPRKSMKRDSNAQNDGTSTMTSKLKPSVGLSNTRDAPKPGGLRRANKPCFNKETKGSIFSKENKGPFTCNPWGAKKVSPPPCEVLADLNTASIFYKFKRLEEMEMTRSLAFNDSKSDWCCLASSRSTSISRKNRYTDIVPYDKTRVRLAVPKGCSDYINASHIDVGNKKYIACQAPKPGTLLDFWEMVWHNSGTNGVIVMLTNLYEAGSEKCSQYWPDNKDHALCLEGGLRISVQKYETFEDLKVNTHLFRLDKPNGPPKYIHHFWVHTWFDKTHPDIESITGIIRCIDKVPNDGPMFVHCSAGVGRTGTFIAVDQILQVPKNILPKTTNLEDSKDFIFNCVNSLRSQRMKMVQNFEQFKFLYDVVDYLNSGVNQASKPLMT.

Residues 21-130 (TESVSWIIDL…FASSHPDAIV (110 aa)) enclose the Rhodanese domain. Disordered regions lie at residues 275–306 (APQQTPARPSLRSVPSYPSSNNQRRPSASRVR) and 329–376 (IIPR…RANK). Composition is skewed to polar residues over residues 290–306 (SYPSSNNQRRPSASRVR) and 340–363 (NAQNDGTSTMTSKLKPSVGLSNTR). The Tyrosine-protein phosphatase domain occupies 433–698 (EMTRSLAFND…KFLYDVVDYL (266 aa)). Catalysis depends on Cys630, which acts as the Phosphocysteine intermediate.

The protein belongs to the protein-tyrosine phosphatase family. Non-receptor class subfamily.

The protein localises to the cytoplasm. The enzyme catalyses O-phospho-L-tyrosyl-[protein] + H2O = L-tyrosyl-[protein] + phosphate. Functionally, plays a role in inhibiting the onset of mitosis. Dephosphorylates sty1/spc1 and wis1/spc2/sty2. The chain is Tyrosine-protein phosphatase 2 (pyp2) from Schizosaccharomyces pombe (strain 972 / ATCC 24843) (Fission yeast).